Here is a 141-residue protein sequence, read N- to C-terminus: Protein X (141 aa).

The span at 24-48 shows a compositional bias: low complexity; sequence QSSGPSFPRPAAGSAASSASSPSPS. The disordered stretch occupies residues 24 to 52; that stretch reads QSSGPSFPRPAAGSAASSASSPSPSDESD. Residues 68–113 form a mitochondrial targeting sequence region; it reads PCCLVFTCAELRTMDSTVNFVSWHANRQLGMPSKDLWTPYIKDQLL.

The protein belongs to the orthohepadnavirus protein X family. As to quaternary structure, may form homodimer. May interact with host CEBPA, CFLAR, CREB1, DDB1, E4F1, HBXIP, HSPD1/HSP60, NFKBIA, POLR2E and SMAD4. Interacts with host SMC5-SMC6 complex and induces its degradation. Interacts with host TRPC4AP; leading to prevent ubiquitination of TRPC4AP. Interacts with host PLSCR1; this interaction promotes ubiquitination and degradation of HBx and impairs HBx-mediated cell proliferation. A fraction may be phosphorylated in insect cells and HepG2 cells, a human hepatoblastoma cell line. Phosphorylated in vitro by host protein kinase C or mitogen-activated protein kinase. N-acetylated in insect cells.

Its subcellular location is the host cytoplasm. It is found in the host nucleus. The protein localises to the host mitochondrion. Multifunctional protein that plays a role in silencing host antiviral defenses and promoting viral transcription. Does not seem to be essential for HBV infection. May be directly involved in development of cirrhosis and liver cancer (hepatocellular carcinoma). Most of cytosolic activities involve modulation of cytosolic calcium. The effect on apoptosis is controversial depending on the cell types in which the studies have been conducted. May induce apoptosis by localizing in mitochondria and causing loss of mitochondrial membrane potential. May also modulate apoptosis by binding host CFLAR, a key regulator of the death-inducing signaling complex (DISC). Promotes viral transcription by using the host E3 ubiquitin ligase DDB1 to target the SMC5-SMC6 complex to proteasomal degradation. This host complex would otherwise bind to viral episomal DNA, and prevents its transcription. Moderately stimulates transcription of many different viral and cellular transcription elements. Promoters and enhancers stimulated by HBx contain DNA binding sites for NF-kappa-B, AP-1, AP-2, c-EBP, ATF/CREB, or the calcium-activated factor NF-AT. The polypeptide is Protein X (Woodchuck hepatitis B virus (isolate 7) (WHV)).